The sequence spans 408 residues: Multidrug resistance protein MdtG (408 aa).

A run of 10 helical transmembrane segments spans residues 16–36 (LIVAWLGCFLTGAAFSLVMPF), 58–78 (IVFSITFLFSAIASPFWGGLA), 92–112 (LGMGIVMVLMGLAQNIWQFLI), 115–135 (ALLGLLGGFVPNANALIATQV), 146–166 (TLSTGGVSGALLGPMAGGLLA), 173–193 (PVFFITASVLILCFFVTLFCI), 221–241 (ILSLFVTTLIIQVATGSIAPI), 256–276 (VAFISGMIASVPGVAALLSAP), 290–310 (ILITALIFSVLLLIPMSYVQT), and 378–398 (AVFLVTAGVVLFNAVYSWNSL).

It belongs to the major facilitator superfamily. DHA1 family. MdtG (TC 2.A.1.2.20) subfamily.

The protein localises to the cell inner membrane. Its function is as follows. Confers resistance to fosfomycin and deoxycholate. The protein is Multidrug resistance protein MdtG of Escherichia coli (strain SMS-3-5 / SECEC).